Consider the following 396-residue polypeptide: Tryptophan synthase beta chain (396 aa).

N6-(pyridoxal phosphate)lysine is present on K86.

This sequence belongs to the TrpB family. In terms of assembly, tetramer of two alpha and two beta chains. Requires pyridoxal 5'-phosphate as cofactor.

It catalyses the reaction (1S,2R)-1-C-(indol-3-yl)glycerol 3-phosphate + L-serine = D-glyceraldehyde 3-phosphate + L-tryptophan + H2O. It participates in amino-acid biosynthesis; L-tryptophan biosynthesis; L-tryptophan from chorismate: step 5/5. The beta subunit is responsible for the synthesis of L-tryptophan from indole and L-serine. The sequence is that of Tryptophan synthase beta chain from Pectobacterium atrosepticum (strain SCRI 1043 / ATCC BAA-672) (Erwinia carotovora subsp. atroseptica).